The primary structure comprises 502 residues: MVLLAAIDQGTSSSRFLVFEADTGELVTSHQIEVRQLFPHGGWVEMDPMELYDTVVSCISKTIEKLENLGISADEIKSVGVANQRETSIVWDKETGKPLYNAIVWLDTRTSSLADEAISRTASKSKDEFRAKTGLPIHPYFSALKLKWLFQNVPEVKKAYADGNLMFGTVDTWLIWKLTGAYVTDVSNASRTLLLDLHKRKWSTQLCEFFDLPIEILPEIRSSAEVYGHFDKGPLEGVPLSGCLGDQQAAMVGHQCLNAGQTKNTYGTGTFMLCNIGTRPIISKNGLLTTVGFQFGADSPVVYALEGSGSIGGNVVRFLRDNFKFISDAKEMEGLCRSVEDTSGAYFVPSFTGLYTPYWDSTARGTILGLTQVTQREHICLAALRAVAFQSAEMIAAVEQDLEGGTKVTTLKVDGGMIANKLFNEIQADIMGRDIVTPKITEISGWGAAVAGGIGAQQISLDEFLQQSSEDNRYTPQKDDNWRSAELARWKEAVKRSCGWAQ.

Threonine 11 provides a ligand contact to substrate. Position 15 (arginine 15) interacts with ATP. Substrate contacts are provided by arginine 85, tyrosine 140, and aspartate 246. ATP-binding positions include threonine 268, glycine 313, and 416–420 (GMIAN).

Belongs to the FGGY kinase family.

It catalyses the reaction glycerol + ATP = sn-glycerol 3-phosphate + ADP + H(+). It functions in the pathway polyol metabolism; glycerol degradation via glycerol kinase pathway; sn-glycerol 3-phosphate from glycerol: step 1/1. This chain is Probable glycerol kinase, found in Caenorhabditis elegans.